The sequence spans 310 residues: Putative methyltransferase mtx subunit H (310 aa).

This sequence belongs to the MtrH family. As to quaternary structure, may be part of a complex composed of 3 subunits; MtxA, MtxH and MtxX.

This is Putative methyltransferase mtx subunit H (mtxH) from Methanosarcina barkeri (strain Fusaro / DSM 804).